We begin with the raw amino-acid sequence, 428 residues long: Protein CANDIDATE G-PROTEIN COUPLED RECEPTOR 6 (428 aa).

Residues 1–22 (MTILPFLAAVFVLQLLSTLTVA) form the signal peptide. N-linked (GlcNAc...) asparagine glycosylation is found at N31, N89, and N157. A run of 7 helical transmembrane segments spans residues 173–193 (LYLV…CFCW), 202–222 (IHLL…CAAV), 238–258 (IVFY…IVLI), 276–296 (LLVI…VIGE), 310–330 (IFFL…VWSM), 356–376 (FYVL…VMKM), and 385–405 (VSNA…FYMF).

Belongs to the LU7TM family.

The protein resides in the membrane. Its function is as follows. G-protein coupled receptor. Plays a role in plants and microbes interactions. In Arabidopsis thaliana (Mouse-ear cress), this protein is Protein CANDIDATE G-PROTEIN COUPLED RECEPTOR 6.